We begin with the raw amino-acid sequence, 218 residues long: 3,4-dihydroxy-2-butanone 4-phosphate synthase (218 aa).

D-ribulose 5-phosphate-binding positions include 37-38, aspartate 42, 150-154, and glutamate 174; these read RE and RSGHT. Residue glutamate 38 participates in Mg(2+) binding. Histidine 153 serves as a coordination point for Mg(2+).

The protein belongs to the DHBP synthase family. In terms of assembly, homodimer. It depends on Mg(2+) as a cofactor. The cofactor is Mn(2+).

The catalysed reaction is D-ribulose 5-phosphate = (2S)-2-hydroxy-3-oxobutyl phosphate + formate + H(+). The protein operates within cofactor biosynthesis; riboflavin biosynthesis; 2-hydroxy-3-oxobutyl phosphate from D-ribulose 5-phosphate: step 1/1. Its function is as follows. Catalyzes the conversion of D-ribulose 5-phosphate to formate and 3,4-dihydroxy-2-butanone 4-phosphate. The chain is 3,4-dihydroxy-2-butanone 4-phosphate synthase from Hamiltonella defensa subsp. Acyrthosiphon pisum (strain 5AT).